Reading from the N-terminus, the 167-residue chain is Xanthine-guanine phosphoribosyltransferase (167 aa).

Residues arginine 47 to glycine 48, glutamine 79, and aspartate 102 to threonine 110 each bind 5-phospho-alpha-D-ribose 1-diphosphate. Residue glutamine 79 participates in GMP binding. Aspartate 103 provides a ligand contact to Mg(2+). Guanine contacts are provided by aspartate 106 and isoleucine 149. Xanthine contacts are provided by aspartate 106 and isoleucine 149. GMP contacts are provided by residues aspartate 106–threonine 110 and tryptophan 148–isoleucine 149.

The protein belongs to the purine/pyrimidine phosphoribosyltransferase family. XGPT subfamily. In terms of assembly, homotetramer. Mg(2+) serves as cofactor.

It localises to the cell inner membrane. It catalyses the reaction GMP + diphosphate = guanine + 5-phospho-alpha-D-ribose 1-diphosphate. The catalysed reaction is XMP + diphosphate = xanthine + 5-phospho-alpha-D-ribose 1-diphosphate. The enzyme catalyses IMP + diphosphate = hypoxanthine + 5-phospho-alpha-D-ribose 1-diphosphate. Its pathway is purine metabolism; GMP biosynthesis via salvage pathway; GMP from guanine: step 1/1. It participates in purine metabolism; XMP biosynthesis via salvage pathway; XMP from xanthine: step 1/1. Functionally, purine salvage pathway enzyme that catalyzes the transfer of the ribosyl-5-phosphate group from 5-phospho-alpha-D-ribose 1-diphosphate (PRPP) to the N9 position of the 6-oxopurines guanine and xanthine to form the corresponding ribonucleotides GMP (guanosine 5'-monophosphate) and XMP (xanthosine 5'-monophosphate), with the release of PPi. To a lesser extent, also acts on hypoxanthine. The sequence is that of Xanthine-guanine phosphoribosyltransferase from Cereibacter sphaeroides (strain ATCC 17029 / ATH 2.4.9) (Rhodobacter sphaeroides).